The following is a 453-amino-acid chain: MATKTKTQWTCNQCGATAPKWLGQCPGCHNWNSLVEEYVPQARSGTSSRSSTSAIALSSIELENESRIFIDHAGWDRILGGGVVRGSLTLLGGDPGIGKSTLLLQTAERLASQKYKVLYVCGEESVTQTSLRAKRLNISSPLIYLFPETNLDNIKQQIATLEPDILIIDSIQIIFNPTLNSAPGSVAQVREVTYELMQIAKSAQITTFIIGHVTKSGEIAGPRVLEHLVDTVLYFEGNSHANYRMIRSVKNRFGPTNELLILSMHADGLKEVSNPSGLFLQEKTGPTTGSMIIPIIEGSGALLIELQALVSSSPFANPVRKTAGFDPNRFSLLLAVLEKRAQVKLFTMDVFLSITGGLKIIEPAADLGALLAVASSLYNRLLPNNSIVIGEVGLGGEIRHVAHLERRIKEGKLMGFEGAILPEGQISSLPKEIRENFRLQGVKTIKDAIRLLL.

The C4-type zinc finger occupies 11 to 28; the sequence is CNQCGATAPKWLGQCPGC. 93–100 contacts ATP; it reads GDPGIGKS. Positions 250-254 match the RadA KNRFG motif motif; it reads KNRFG. Residues 349–453 are lon-protease-like; that stretch reads DVFLSITGGL…TIKDAIRLLL (105 aa).

The protein belongs to the RecA family. RadA subfamily.

Functionally, DNA-dependent ATPase involved in processing of recombination intermediates, plays a role in repairing DNA breaks. Stimulates the branch migration of RecA-mediated strand transfer reactions, allowing the 3' invading strand to extend heteroduplex DNA faster. Binds ssDNA in the presence of ADP but not other nucleotides, has ATPase activity that is stimulated by ssDNA and various branched DNA structures, but inhibited by SSB. Does not have RecA's homology-searching function. In Chlamydia pneumoniae (Chlamydophila pneumoniae), this protein is DNA repair protein RadA.